Reading from the N-terminus, the 1075-residue chain is Carbamoyl phosphate synthase large chain (1075 aa).

Residues 1–403 form a carboxyphosphate synthetic domain region; sequence MPKRTDINTI…SLQKALRGLE (403 aa). ATP contacts are provided by Arg129, Arg169, Gly175, Gly176, Gln208, Val210, Glu215, Gly241, Val242, His243, Gln285, and Glu299. Residues 133–328 form the ATP-grasp 1 domain; it reads KDAMTKIGLN…IAKVAAKLAV (196 aa). Positions 285, 299, and 301 each coordinate Mg(2+). Mn(2+) contacts are provided by Gln285, Glu299, and Asn301. The oligomerization domain stretch occupies residues 404–548; the sequence is IGICGFNLRS…YSTYEDECEA (145 aa). A carbamoyl phosphate synthetic domain region spans residues 549-930; sequence KPTTRQKVMI…AYYKAQLGAG (382 aa). Residues 673–864 enclose the ATP-grasp 2 domain; the sequence is QKILTDLGLK…LAKIAALVMA (192 aa). Arg709, His748, Leu750, Glu755, Gly780, Ile781, His782, Ser783, Gln823, and Glu835 together coordinate ATP. The Mg(2+) site is built by Gln823, Glu835, and Asn837. Mn(2+) is bound by residues Gln823, Glu835, and Asn837. In terms of domain architecture, MGS-like spans 931–1070; the sequence is ERIPSTGKVF…QQLHLSSALA (140 aa). The tract at residues 931 to 1075 is allosteric domain; that stretch reads ERIPSTGKVF…SSALANQITR (145 aa).

It belongs to the CarB family. Composed of two chains; the small (or glutamine) chain promotes the hydrolysis of glutamine to ammonia, which is used by the large (or ammonia) chain to synthesize carbamoyl phosphate. Tetramer of heterodimers (alpha,beta)4. Mg(2+) is required as a cofactor. Mn(2+) serves as cofactor.

The enzyme catalyses hydrogencarbonate + L-glutamine + 2 ATP + H2O = carbamoyl phosphate + L-glutamate + 2 ADP + phosphate + 2 H(+). It catalyses the reaction hydrogencarbonate + NH4(+) + 2 ATP = carbamoyl phosphate + 2 ADP + phosphate + 2 H(+). The protein operates within amino-acid biosynthesis; L-arginine biosynthesis; carbamoyl phosphate from bicarbonate: step 1/1. It functions in the pathway pyrimidine metabolism; UMP biosynthesis via de novo pathway; (S)-dihydroorotate from bicarbonate: step 1/3. Functionally, large subunit of the glutamine-dependent carbamoyl phosphate synthetase (CPSase). CPSase catalyzes the formation of carbamoyl phosphate from the ammonia moiety of glutamine, carbonate, and phosphate donated by ATP, constituting the first step of 2 biosynthetic pathways, one leading to arginine and/or urea and the other to pyrimidine nucleotides. The large subunit (synthetase) binds the substrates ammonia (free or transferred from glutamine from the small subunit), hydrogencarbonate and ATP and carries out an ATP-coupled ligase reaction, activating hydrogencarbonate by forming carboxy phosphate which reacts with ammonia to form carbamoyl phosphate. In Haemophilus ducreyi (strain 35000HP / ATCC 700724), this protein is Carbamoyl phosphate synthase large chain.